A 445-amino-acid polypeptide reads, in one-letter code: Crotonyl-CoA reductase (445 aa).

Glu-149 is a Zn(2+) binding site.

The protein belongs to the zinc-containing alcohol dehydrogenase family. Crotonyl-CoA carboxylase/reductase subfamily. Homodimer. It depends on Zn(2+) as a cofactor.

The catalysed reaction is butanoyl-CoA + NADP(+) = (2E)-butenoyl-CoA + NADPH + H(+). Inhibited by NADPH at concentrations above 200 uM, by MgCl (30%), by ZnCl(2) (55%), and by CoCl, MnCl and CaCl (100%). Also inhibited by iodoacetamide, N-ethylmaleamide, the thiol group inhibitor beta-chloromercuribenzoate, palmitoyl-CoA and myristoyl-CoA. Catalyzes the conversion of crotonyl-CoA to butyryl-CoA. It uses only NADP as electron donor. May have a role in providing butyryl-CoA as a starter unit for straight-chain fatty acid biosynthesis. In Streptomyces avermitilis (strain ATCC 31267 / DSM 46492 / JCM 5070 / NBRC 14893 / NCIMB 12804 / NRRL 8165 / MA-4680), this protein is Crotonyl-CoA reductase (ccrA2).